Consider the following 248-residue polypeptide: PF03932 family protein CutC (248 aa).

Belongs to the CutC family. As to quaternary structure, homodimer.

The protein localises to the cytoplasm. The polypeptide is PF03932 family protein CutC (Salmonella paratyphi B (strain ATCC BAA-1250 / SPB7)).